The primary structure comprises 88 residues: DNA-directed RNA polymerase subunit omega (88 aa).

The protein belongs to the RNA polymerase subunit omega family. In terms of assembly, the RNAP catalytic core consists of 2 alpha, 1 beta, 1 beta' and 1 omega subunit. When a sigma factor is associated with the core the holoenzyme is formed, which can initiate transcription.

It carries out the reaction RNA(n) + a ribonucleoside 5'-triphosphate = RNA(n+1) + diphosphate. In terms of biological role, promotes RNA polymerase assembly. Latches the N- and C-terminal regions of the beta' subunit thereby facilitating its interaction with the beta and alpha subunits. The polypeptide is DNA-directed RNA polymerase subunit omega (Thermobifida fusca (strain YX)).